We begin with the raw amino-acid sequence, 428 residues long: Pyruvate kinase (428 aa).

Arg34 is a substrate binding site. K(+)-binding residues include Asn36, Ser38, Asp68, and Thr69. 36–39 (NFSH) contacts ATP. ATP-binding residues include Arg75 and Lys152. Residue Glu214 participates in Mg(2+) binding. 3 residues coordinate substrate: Gly237, Asp238, and Thr270. Residue Asp238 coordinates Mg(2+).

It belongs to the pyruvate kinase family. Homotetramer. Mg(2+) is required as a cofactor. Requires K(+) as cofactor.

It carries out the reaction pyruvate + ATP = phosphoenolpyruvate + ADP + H(+). Its pathway is carbohydrate degradation; glycolysis; pyruvate from D-glyceraldehyde 3-phosphate: step 5/5. The sequence is that of Pyruvate kinase (PYK1) from Encephalitozoon cuniculi (strain GB-M1) (Microsporidian parasite).